A 504-amino-acid chain; its full sequence is Ribonuclease Y (504 aa).

The KH domain maps to 194–279 (TVHVVSLPND…EMVEKAKQEV (86 aa)). An HD domain is found at 320 to 413 (VLKHSMEVAY…VQAADAISAA (94 aa)).

Belongs to the RNase Y family.

Functionally, endoribonuclease that initiates mRNA decay. The sequence is that of Ribonuclease Y from Clostridium novyi (strain NT).